The sequence spans 267 residues: Thiamine pyrophosphokinase 2 (267 aa).

Belongs to the thiamine pyrophosphokinase family. As to expression, expressed in leaves and at lower levels in flowers.

The protein localises to the cytoplasm. Its subcellular location is the cytosol. The catalysed reaction is thiamine + ATP = thiamine diphosphate + AMP + H(+). Its pathway is cofactor biosynthesis; thiamine diphosphate biosynthesis; thiamine diphosphate from thiamine: step 1/1. Catalyzes the phosphorylation of thiamine to thiamine pyrophosphate (TPP). TPP is an active cofactor for enzymes involved in glycolysis and energy production. Plant leaves require high levels of TPP for photosynthesis and carbohydrate metabolism. This chain is Thiamine pyrophosphokinase 2, found in Arabidopsis thaliana (Mouse-ear cress).